Consider the following 714-residue polypeptide: Protein ESC8 (714 aa).

Disordered regions lie at residues 598–674 and 694–714; these read APTG…ELHN and RQLQ…RKGL. Positions 610-624 are enriched in polar residues; sequence TSSQRRTTVHYSSDV. The segment covering 628–650 has biased composition (acidic residues); that stretch reads VSEESENEVDIDVSDDYDSEYLS. Basic and acidic residues predominate over residues 654–674; sequence TLTRKGEDRTDKSFGKRELHN. Residues 704-714 show a composition bias toward basic residues; that stretch reads RSLRRNARKGL.

In terms of assembly, interacts with GAL11 and SIR2.

It is found in the cytoplasm. It localises to the nucleus. Its function is as follows. Involved in HMR and telomere silencing via the recruitment or stabilizing of the SIR (silent information regulators) complex. The protein is Protein ESC8 (ESC8) of Saccharomyces cerevisiae (strain ATCC 204508 / S288c) (Baker's yeast).